We begin with the raw amino-acid sequence, 152 residues long: Siroheme decarboxylase NirD subunit (152 aa).

This sequence belongs to the Ahb/Nir family. Probably forms a complex composed of NirD, NirL, NirG and NirH. All proteins are required for the total conversion of siroheme to didecarboxysiroheme.

The enzyme catalyses siroheme + 2 H(+) = 12,18-didecarboxysiroheme + 2 CO2. Its pathway is porphyrin-containing compound metabolism. Involved in heme d1 biosynthesis. Catalyzes the decarboxylation of siroheme into didecarboxysiroheme. The polypeptide is Siroheme decarboxylase NirD subunit (Stutzerimonas stutzeri (Pseudomonas stutzeri)).